The following is a 271-amino-acid chain: L-aspartate dehydrogenase (271 aa).

Residues Ala-124 and Asn-192 each contribute to the NAD(+) site. Residue His-222 is part of the active site.

Belongs to the L-aspartate dehydrogenase family.

It catalyses the reaction L-aspartate + NADP(+) + H2O = oxaloacetate + NH4(+) + NADPH + H(+). The enzyme catalyses L-aspartate + NAD(+) + H2O = oxaloacetate + NH4(+) + NADH + H(+). It functions in the pathway cofactor biosynthesis; NAD(+) biosynthesis; iminoaspartate from L-aspartate (dehydrogenase route): step 1/1. Specifically catalyzes the NAD or NADP-dependent dehydrogenation of L-aspartate to iminoaspartate. This is L-aspartate dehydrogenase from Methanosarcina mazei (strain ATCC BAA-159 / DSM 3647 / Goe1 / Go1 / JCM 11833 / OCM 88) (Methanosarcina frisia).